Here is a 229-residue protein sequence, read N- to C-terminus: Ribonuclease T (229 aa).

An Exonuclease domain is found at 23–197; the sequence is VIIDVETAGF…YDTERTAELF (175 aa). Mg(2+)-binding residues include D26, E28, H184, and D189. The Proton donor/acceptor role is filled by H184.

Belongs to the RNase T family. As to quaternary structure, homodimer. Requires Mg(2+) as cofactor.

Functionally, trims short 3' overhangs of a variety of RNA species, leaving a one or two nucleotide 3' overhang. Responsible for the end-turnover of tRNA: specifically removes the terminal AMP residue from uncharged tRNA (tRNA-C-C-A). Also appears to be involved in tRNA biosynthesis. In Haemophilus influenzae (strain PittEE), this protein is Ribonuclease T.